The following is a 232-amino-acid chain: Phosphatidylserine decarboxylase proenzyme (232 aa).

The active-site Schiff-base intermediate with substrate; via pyruvic acid is Ser190. The residue at position 190 (Ser190) is a Pyruvic acid (Ser); by autocatalysis.

It belongs to the phosphatidylserine decarboxylase family. PSD-A subfamily. Heterodimer of a large membrane-associated beta subunit and a small pyruvoyl-containing alpha subunit. The cofactor is pyruvate. In terms of processing, is synthesized initially as an inactive proenzyme. Formation of the active enzyme involves a self-maturation process in which the active site pyruvoyl group is generated from an internal serine residue via an autocatalytic post-translational modification. Two non-identical subunits are generated from the proenzyme in this reaction, and the pyruvate is formed at the N-terminus of the alpha chain, which is derived from the carboxyl end of the proenzyme. The post-translation cleavage follows an unusual pathway, termed non-hydrolytic serinolysis, in which the side chain hydroxyl group of the serine supplies its oxygen atom to form the C-terminus of the beta chain, while the remainder of the serine residue undergoes an oxidative deamination to produce ammonia and the pyruvoyl prosthetic group on the alpha chain.

The protein resides in the cell membrane. It carries out the reaction a 1,2-diacyl-sn-glycero-3-phospho-L-serine + H(+) = a 1,2-diacyl-sn-glycero-3-phosphoethanolamine + CO2. The protein operates within phospholipid metabolism; phosphatidylethanolamine biosynthesis; phosphatidylethanolamine from CDP-diacylglycerol: step 2/2. Its function is as follows. Catalyzes the formation of phosphatidylethanolamine (PtdEtn) from phosphatidylserine (PtdSer). This is Phosphatidylserine decarboxylase proenzyme from Bartonella bacilliformis (strain ATCC 35685 / KC583 / Herrer 020/F12,63).